A 397-amino-acid chain; its full sequence is Penicillopepsin-1 (397 aa).

An N-terminal signal peptide occupies residues 1 to 20; the sequence is MVVFSQVTVALTCFSAIASA. The propeptide at 21–71 is activation peptide; that stretch reads AAVRQEPPQGFTVNQVQKAVPGTRTVNLPGLYANALVKYGATVPATVHAAA. The region spanning 87–394 is the Peptidase A1 domain; the sequence is YLTPVTIGSS…DSEGPRLGFA (308 aa). Catalysis depends on residues D103 and D285. N311 carries N-linked (GlcNAc...) asparagine glycosylation. C322 and C357 are disulfide-bonded.

The protein belongs to the peptidase A1 family. Monomer.

The protein resides in the secreted. It carries out the reaction Hydrolysis of proteins with broad specificity similar to that of pepsin A, preferring hydrophobic residues at P1 and P1', but also cleaving 20-Gly-|-Glu-21 in the B chain of insulin. Clots milk, and activates trypsinogen.. In terms of biological role, secreted aspartic endopeptidase that allows assimilation of proteinaceous substrates. The scissile peptide bond is attacked by a nucleophilic water molecule activated by two aspartic residues in the active site. Shows a broad primary substrate specificity. Favors hydrophobic residues at the P1 and P1' positions, but can also activate trypsinogen and hydrolyze the B chain of insulin between positions 'Gly-20' and 'Glu-21'. The polypeptide is Penicillopepsin-1 (Penicillium roqueforti).